A 180-amino-acid polypeptide reads, in one-letter code: Trafficking protein particle complex subunit 3 (180 aa).

Cys68 carries the S-palmitoyl cysteine lipid modification.

Belongs to the TRAPP small subunits family. BET3 subfamily. As to quaternary structure, homodimer. Part of the multisubunit TRAPP (transport protein particle) complex.

It is found in the golgi apparatus. The protein resides in the cis-Golgi network. The protein localises to the endoplasmic reticulum. Functionally, may play a role in vesicular transport from endoplasmic reticulum to Golgi. The sequence is that of Trafficking protein particle complex subunit 3 (TRAPPC3) from Gallus gallus (Chicken).